A 274-amino-acid chain; its full sequence is Protein RecA (274 aa).

43–50 serves as a coordination point for ATP; that stretch reads GPESSGKT.

It belongs to the RecA family.

Its subcellular location is the cytoplasm. In terms of biological role, can catalyze the hydrolysis of ATP in the presence of single-stranded DNA, the ATP-dependent uptake of single-stranded DNA by duplex DNA, and the ATP-dependent hybridization of homologous single-stranded DNAs. It interacts with LexA causing its activation and leading to its autocatalytic cleavage. This Neisseria polysaccharea protein is Protein RecA.